A 534-amino-acid polypeptide reads, in one-letter code: SWI/SNF complex component SNF12 homolog (534 aa).

The segment covering 1-12 (MSGNNNNPQKPQ) has biased composition (polar residues). Disordered regions lie at residues 1–33 (MSGN…PGNQ) and 78–132 (MTMN…SPMR). Residues 94–105 (PSSPSLTTPGSL) are compositionally biased toward low complexity. In terms of domain architecture, SWIB/MDM2 spans 314–391 (YVPEKFKLST…SQKISHHLSP (78 aa)).

The protein belongs to the SMARCD family. Part of a SWI-SNF complex.

It is found in the nucleus. Involved in transcriptional activation and repression of select genes by chromatin remodeling (alteration of DNA-nucleosome topology). The sequence is that of SWI/SNF complex component SNF12 homolog from Arabidopsis thaliana (Mouse-ear cress).